Here is a 79-residue protein sequence, read N- to C-terminus: Moronecidin (79 aa).

The signal sequence occupies residues 1 to 22 (MKCATLSLVLSMVVLMAEPGDA). Gly44 carries the post-translational modification Glycine amide. The disordered stretch occupies residues 45 to 68 (GKAEQDQQDQQYQQDQQDQQAQQY). Residues 47–79 (AEQDQQDQQYQQDQQDQQAQQYQRFNRERAAFD) constitute a propeptide that is removed on maturation. Over residues 52 to 68 (QDQQYQQDQQDQQAQQY) the composition is skewed to low complexity.

Expressed in gill, skin, intestine, spleen, anterior kidney, and blood cells.

The protein localises to the secreted. Antimicrobial peptide with broad-spectrum activity against Gram-positive and Gram-negative bacteria as well as against a variety of fungi. Rapidly inactivates both channel catfish herpesvirus (ED(50)=4 uM) and frog virus 3 (ED(50)=13 uM) over a wide temperature range. Seems to disrupt the membranes by adopting an alpha helical conformation. In Morone chrysops (White bass), this protein is Moronecidin.